The sequence spans 63 residues: Large ribosomal subunit protein bL28 (63 aa).

The tract at residues 1-20 is disordered; it reads MSKRCAITGKGPMVGNNVSH.

Belongs to the bacterial ribosomal protein bL28 family.

The polypeptide is Large ribosomal subunit protein bL28 (Campylobacter fetus subsp. fetus (strain 82-40)).